The following is a 378-amino-acid chain: Homoserine O-acetyltransferase (378 aa).

An AB hydrolase-1 domain is found at 54–355; it reads NAILVCHALS…NNPAGHDSFL (302 aa). The Nucleophile role is filled by Ser-159. Arg-228 is a substrate binding site. Active-site residues include Asp-318 and His-351. Asp-352 contacts substrate.

The protein belongs to the AB hydrolase superfamily. MetX family. As to quaternary structure, homodimer.

It is found in the cytoplasm. It carries out the reaction L-homoserine + acetyl-CoA = O-acetyl-L-homoserine + CoA. Its pathway is amino-acid biosynthesis; L-methionine biosynthesis via de novo pathway; O-acetyl-L-homoserine from L-homoserine: step 1/1. Its function is as follows. Transfers an acetyl group from acetyl-CoA to L-homoserine, forming acetyl-L-homoserine. The polypeptide is Homoserine O-acetyltransferase (Leptospira biflexa serovar Patoc (strain Patoc 1 / Ames)).